Here is a 226-residue protein sequence, read N- to C-terminus: Putative methyltransferase RP459 (226 aa).

This sequence belongs to the methyltransferase superfamily.

The chain is Putative methyltransferase RP459 from Rickettsia prowazekii (strain Madrid E).